Consider the following 108-residue polypeptide: UPF0145 protein LJ_1287 (108 aa).

It belongs to the UPF0145 family.

This chain is UPF0145 protein LJ_1287, found in Lactobacillus johnsonii (strain CNCM I-12250 / La1 / NCC 533).